The sequence spans 192 residues: Inner membrane protein YohD (192 aa).

Residues 1 to 40 (MDLNTLISQYGYAALVIGSLAEGETVTLLGGVAAHQGLLK) are Periplasmic-facing. A helical transmembrane segment spans residues 41-61 (FPLVVLSVALGGMIGDQVLYL). Topologically, residues 62 to 121 (CGRRFGGKLLRRFSKHQDKIERAQKLIQRHPYLFVIGTRFMYGFRVIGPTLIGASQLPPK) are cytoplasmic. A helical membrane pass occupies residues 122–142 (IFLPLNILGAFAWALIFTTIG). Topologically, residues 143 to 159 (YAGGQVIAPWLHNLDQH) are periplasmic. A helical membrane pass occupies residues 160 to 180 (LKHWVWLILVVVLVVGVRWWL). The Cytoplasmic segment spans residues 181 to 192 (KRRGKKKPDHQA).

It belongs to the DedA family.

It localises to the cell inner membrane. The chain is Inner membrane protein YohD (yohD) from Escherichia coli (strain K12).